The chain runs to 68 residues: Large ribosomal subunit protein uL29 (68 aa).

This sequence belongs to the universal ribosomal protein uL29 family.

In Streptococcus gordonii (strain Challis / ATCC 35105 / BCRC 15272 / CH1 / DL1 / V288), this protein is Large ribosomal subunit protein uL29.